A 680-amino-acid polypeptide reads, in one-letter code: Nodulation protein NolNO (680 aa).

The protein belongs to the NodU/CmcH family.

It localises to the cytoplasm. Involved in the O-carbamoylation of nod factors. The sequence is that of Nodulation protein NolNO (nolO) from Sinorhizobium fredii (strain NBRC 101917 / NGR234).